Consider the following 413-residue polypeptide: CinA-like protein (413 aa).

It belongs to the CinA family.

The protein is CinA-like protein of Desulfosudis oleivorans (strain DSM 6200 / JCM 39069 / Hxd3) (Desulfococcus oleovorans).